The following is a 718-amino-acid chain: GMP synthase [glutamine-hydrolyzing] (718 aa).

A Glutamine amidotransferase type-1 domain is found at 43-247 (VIVILDAGSQ…LIDICGCSAN (205 aa)). Residues C128, H221, and E223 each act as for GATase activity in the active site. A GMPS ATP-PPase domain is found at 248 to 457 (YTLDDREQQA…LGLSDSLVWR (210 aa)). 275-281 (SGGVDST) contacts ATP.

Homodimer.

It catalyses the reaction XMP + L-glutamine + ATP + H2O = GMP + L-glutamate + AMP + diphosphate + 2 H(+). It functions in the pathway purine metabolism; GMP biosynthesis; GMP from XMP (L-Gln route): step 1/1. This is GMP synthase [glutamine-hydrolyzing] (guaA) from Dictyostelium discoideum (Social amoeba).